Here is a 568-residue protein sequence, read N- to C-terminus: Sesquiterpene synthase 14 (568 aa).

Aspartate 319, aspartate 323, aspartate 463, and glutamate 471 together coordinate Mg(2+). Positions 319 to 323 (DDLYD) match the DDXXD motif motif.

It belongs to the terpene synthase family. Tpsa subfamily. The cofactor is Mg(2+). Requires Mn(2+) as cofactor. Mostly expressed in roots, to a lower extent in flowers and, at low levels, in fruits.

The catalysed reaction is (2Z,6Z)-farnesyl diphosphate = (E)-alpha-bisabolene + diphosphate. It carries out the reaction (2Z,6Z)-farnesyl diphosphate = beta-bisabolene + diphosphate. The enzyme catalyses (2E,6E)-farnesyl diphosphate = beta-bisabolene + diphosphate. It catalyses the reaction (2E,6E)-farnesyl diphosphate = (Z)-gamma-bisabolene + diphosphate. The catalysed reaction is (2E,6E)-farnesyl diphosphate = (E)-gamma-bisabolene + diphosphate. It carries out the reaction (2Z,6Z)-farnesyl diphosphate = (E)-gamma-bisabolene + diphosphate. The protein operates within secondary metabolite biosynthesis; terpenoid biosynthesis. Functionally, sesquiterpene synthase involved in the biosynthesis of volatile compounds. Mediates the conversion of (2E,6E)-farnesyl diphosphate ((EE)-FPP) into beta-bisabolene, and of (2Z,6Z)-farnesyl diphosphate ((ZZ)-FPP) into alpha-bisabolene, but also smaller amounts of (Z)-gamma-bisabolene, (E)-gamma-bisabolene and nerolidol. The protein is Sesquiterpene synthase 14 of Solanum lycopersicum (Tomato).